The primary structure comprises 336 residues: Quinolinate synthase (336 aa).

Iminosuccinate-binding residues include histidine 25 and serine 42. Residue cysteine 86 coordinates [4Fe-4S] cluster. Iminosuccinate contacts are provided by residues 117 to 119 (YIN) and serine 138. A [4Fe-4S] cluster-binding site is contributed by cysteine 198. Residues 224–226 (HPE) and threonine 241 each bind iminosuccinate. [4Fe-4S] cluster is bound at residue cysteine 288.

Belongs to the quinolinate synthase family. Type 3 subfamily. [4Fe-4S] cluster is required as a cofactor.

The protein localises to the cytoplasm. It catalyses the reaction iminosuccinate + dihydroxyacetone phosphate = quinolinate + phosphate + 2 H2O + H(+). It participates in cofactor biosynthesis; NAD(+) biosynthesis; quinolinate from iminoaspartate: step 1/1. Catalyzes the condensation of iminoaspartate with dihydroxyacetone phosphate to form quinolinate. The chain is Quinolinate synthase from Helicobacter pylori (strain HPAG1).